The following is a 382-amino-acid chain: Sphingosine kinase 1 (382 aa).

The region spanning 12–159 (PRPCRVLVLL…MNLLSLHTAS (148 aa)) is the DAGKc domain. Residues 22–24 (NPQ) and 54–58 (TERKN) each bind ATP. 79–82 (SGDG) serves as a coordination point for substrate. Asp81 serves as the catalytic Proton donor/acceptor. Residues Glu86 and 111-113 (GSG) contribute to the ATP site. 2 short sequence motifs (nuclear export signal) span residues 147 to 155 (LSPMNLLSL) and 161 to 169 (LRLYSVLSL). A substrate-binding site is contributed by Asp178. Positions 185 and 191 each coordinate ATP. A Phosphothreonine modification is found at Thr193. Ser225 is modified (phosphoserine). 340–342 (DGE) serves as a coordination point for ATP.

In terms of assembly, interacts with ACY1. Binds to calmodulin. Interacts with SPHKAP. Interacts with CIB1, the interaction occurs in a calcium-dependent manner. Interacts with TRAF2. Interacts with EEF1A1; the interaction enhances SPHK1 kinase activity. The cofactor is Mg(2+). Widely expressed. Expressed in brain (at protein level). Detected in neurons.

Its subcellular location is the cytoplasm. The protein localises to the endosome membrane. It localises to the nucleus. It is found in the cell membrane. The protein resides in the synapse. It carries out the reaction a sphingoid base + ATP = a sphingoid 1-phosphate + ADP + H(+). The enzyme catalyses L-seryl-[protein] + acetyl-CoA = O-acetyl-L-seryl-[protein] + CoA. The catalysed reaction is sphinganine + ATP = sphinganine 1-phosphate + ADP + H(+). It catalyses the reaction sphing-4-enine + ATP = sphing-4-enine 1-phosphate + ADP + H(+). It carries out the reaction 1-O-hexadecyl-2-amino-sn-glycerol + ATP = 1-O-hexadecyl-2-desoxy-2-amino-sn-glycero-3-phosphate + ADP + H(+). Its activity is regulated as follows. Acetyltransferase activity increases in presence of the kinase substrate, sphingosine. In Purkinje cells, kinase activity on sphingosine increases in presence of VEGFA. In neurons, kinase activity increases during the first 24h in presence of Amyloid-beta protein 42 to decrease after 96h. Its function is as follows. Catalyzes the phosphorylation of sphingosine to form sphingosine 1-phosphate (SPP), a lipid mediator with both intra- and extracellular functions. Also acts on D-erythro-sphingosine and to a lesser extent sphinganine, but not other lipids, such as D,L-threo-dihydrosphingosine, N,N-dimethylsphingosine, diacylglycerol, ceramide, or phosphatidylinositol. In contrast to proapoptotic SPHK2, has a negative effect on intracellular ceramide levels, enhances cell growth and inhibits apoptosis. Involved in the regulation of inflammatory response and neuroinflammation. Via the product sphingosine 1-phosphate, stimulates TRAF2 E3 ubiquitin ligase activity, and promotes activation of NF-kappa-B in response to TNF signaling. In response to TNF and in parallel to NF-kappa-B activation, negatively regulates RANTES induction through p38 MAPK signaling pathway. Involved in endocytic membrane trafficking induced by sphingosine, recruited to dilate endosomes, also plays a role on later stages of endosomal maturation and membrane fusion independently of its kinase activity. In Purkinje cells, seems to be also involved in the regulation of autophagosome-lysosome fusion upon VEGFA. Has serine acetyltransferase activity on PTGS2/COX2 in an acetyl-CoA dependent manner. The acetyltransferase activity increases in presence of the kinase substrate, sphingosine. During neuroinflammation, through PTGS2 acetylation, promotes neuronal secretion of specialized preresolving mediators (SPMs), especially 15-R-lipoxin A4, which results in an increase of phagocytic microglia. This chain is Sphingosine kinase 1, found in Mus musculus (Mouse).